Here is a 302-residue protein sequence, read N- to C-terminus: UDP-N-acetylenolpyruvoylglucosamine reductase (302 aa).

The FAD-binding PCMH-type domain maps to 32-195 (LGGPADLLAR…VTVTLELVPD (164 aa)). Arg-175 is a catalytic residue. Ser-224 acts as the Proton donor in catalysis. Residue Glu-294 is part of the active site.

This sequence belongs to the MurB family. FAD serves as cofactor.

It is found in the cytoplasm. It catalyses the reaction UDP-N-acetyl-alpha-D-muramate + NADP(+) = UDP-N-acetyl-3-O-(1-carboxyvinyl)-alpha-D-glucosamine + NADPH + H(+). The protein operates within cell wall biogenesis; peptidoglycan biosynthesis. Functionally, cell wall formation. This chain is UDP-N-acetylenolpyruvoylglucosamine reductase, found in Moorella thermoacetica (strain ATCC 39073 / JCM 9320).